The sequence spans 111 residues: 2Fe-2S ferredoxin (111 aa).

A 2Fe-2S ferredoxin-type domain is found at 5–107; sequence IKVTFVINNG…GIKVRLPSAT (103 aa). 4 residues coordinate [2Fe-2S] cluster: cysteine 42, cysteine 48, cysteine 51, and cysteine 88.

Belongs to the adrenodoxin/putidaredoxin family. It depends on [2Fe-2S] cluster as a cofactor.

In terms of biological role, ferredoxin are iron-sulfur proteins that transfer electrons in a wide variety of metabolic reactions. The polypeptide is 2Fe-2S ferredoxin (fdxB) (Rickettsia bellii (strain RML369-C)).